The following is a 77-amino-acid chain: Small ribosomal subunit protein bS21 (77 aa).

Belongs to the bacterial ribosomal protein bS21 family.

This Bartonella tribocorum (strain CIP 105476 / IBS 506) protein is Small ribosomal subunit protein bS21.